Consider the following 237-residue polypeptide: Ribosomal RNA small subunit methyltransferase G (237 aa).

Residues G78, F83, 129–130, and R148 contribute to the S-adenosyl-L-methionine site; that span reads AE.

It belongs to the methyltransferase superfamily. RNA methyltransferase RsmG family.

The protein localises to the cytoplasm. Functionally, specifically methylates the N7 position of a guanine in 16S rRNA. The protein is Ribosomal RNA small subunit methyltransferase G of Streptococcus equi subsp. zooepidemicus (strain MGCS10565).